The following is a 300-amino-acid chain: Acetylglutamate kinase (300 aa).

Substrate contacts are provided by residues 73 to 74, Arg95, and Asn197; that span reads GG.

The protein belongs to the acetylglutamate kinase family. ArgB subfamily.

The protein resides in the cytoplasm. It carries out the reaction N-acetyl-L-glutamate + ATP = N-acetyl-L-glutamyl 5-phosphate + ADP. Its pathway is amino-acid biosynthesis; L-arginine biosynthesis; N(2)-acetyl-L-ornithine from L-glutamate: step 2/4. In terms of biological role, catalyzes the ATP-dependent phosphorylation of N-acetyl-L-glutamate. The sequence is that of Acetylglutamate kinase from Polynucleobacter asymbioticus (strain DSM 18221 / CIP 109841 / QLW-P1DMWA-1) (Polynucleobacter necessarius subsp. asymbioticus).